A 596-amino-acid chain; its full sequence is Elongation factor 4 (596 aa).

Positions 2-184 constitute a tr-type G domain; that stretch reads DHIRNFSIIA…AVVARIPPPK (183 aa). Residues 14-19 and 131-134 each bind GTP; these read DHGKST and NKID.

The protein belongs to the TRAFAC class translation factor GTPase superfamily. Classic translation factor GTPase family. LepA subfamily.

Its subcellular location is the cell inner membrane. The catalysed reaction is GTP + H2O = GDP + phosphate + H(+). Required for accurate and efficient protein synthesis under certain stress conditions. May act as a fidelity factor of the translation reaction, by catalyzing a one-codon backward translocation of tRNAs on improperly translocated ribosomes. Back-translocation proceeds from a post-translocation (POST) complex to a pre-translocation (PRE) complex, thus giving elongation factor G a second chance to translocate the tRNAs correctly. Binds to ribosomes in a GTP-dependent manner. This chain is Elongation factor 4, found in Dechloromonas aromatica (strain RCB).